The following is a 993-amino-acid chain: General transcription factor II-I repeat domain-containing protein 1 (993 aa).

GTF2I-like repeat units follow at residues 117 to 211 and 332 to 426; these read LGPT…EPKS and LRET…DGTT. A disordered region spans residues 461–480; sequence GSRSEKSSISDECEPGTSSE. GTF2I-like repeat units lie at residues 597–691, 727–821, and 824–918; these read DGIG…LEDC, LSRI…RPDD, and ANRL…ICSE. A disordered region spans residues 916 to 961; that stretch reads CSEPPKIKNGNTGPKRKRKRVSEGNSISSASSNCSSSSSSSSNMDP. Positions 929–936 match the Nuclear localization signal motif; that stretch reads PKRKRKRV. A compositionally biased stretch (low complexity) spans 938-961; that stretch reads EGNSISSASSNCSSSSSSSSNMDP.

This sequence belongs to the TFII-I family. As to quaternary structure, interacts (via repeats 4-5) with foxh1/fast1 (via Fork-head domain). Interacts with smad2 and smad3 (via MH1 domain) in a ligand (activin)-dependent manner. Interacts with pou5f1.1/oct-25 to form a repression complex on the promoters of the gsc and mix2 genes. As to expression, uniformly expressed in the embryo in pre- and early gastrula stages. Enriched in the head region of early neurula through tailbud stages.

It localises to the nucleus. In terms of biological role, transcription factor that activates a subset of organizer-specific genes. Binds to the distal element (DE) of the gsc promoter to regulate its expression. In the presence of pou5f1.1/oct-25, forms a repression complex on the promoter of the gsc and mix2 genes to inhibit their transcription. This chain is General transcription factor II-I repeat domain-containing protein 1 (gtf2ird1), found in Xenopus laevis (African clawed frog).